The primary structure comprises 589 residues: Serine/threonine-protein kinase PknJ (589 aa).

The Cytoplasmic portion of the chain corresponds to 1–342 (MAHELSAGSV…LPRRPRRYRR (342 aa)). The region spanning 14–276 (YRIERMLGAG…SAGEFAHAAA (263 aa)) is the Protein kinase domain. Residues 20–28 (LGAGGMGTV) and Lys43 each bind ATP. Residue Asp136 is the Proton acceptor of the active site. Residues 343-363 (GVAAVAAVMVVAAAAVTAVTM) form a helical membrane-spanning segment. At 364-589 (TSHQPRTATP…TNYILAKIPG (226 aa)) the chain is on the extracellular side. The segment covering 365-387 (SHQPRTATPPSAAALSPTSSSTT) has biased composition (low complexity). The tract at residues 365–400 (SHQPRTATPPSAAALSPTSSSTTPPQPPIVTRSRLP) is disordered.

It belongs to the protein kinase superfamily. Ser/Thr protein kinase family. Homodimer.

The protein localises to the cell membrane. It catalyses the reaction L-seryl-[protein] + ATP = O-phospho-L-seryl-[protein] + ADP + H(+). It carries out the reaction L-threonyl-[protein] + ATP = O-phospho-L-threonyl-[protein] + ADP + H(+). This Mycobacterium bovis (strain ATCC BAA-935 / AF2122/97) protein is Serine/threonine-protein kinase PknJ (pknJ).